Consider the following 243-residue polypeptide: Ubiquinone/menaquinone biosynthesis C-methyltransferase UbiE (243 aa).

S-adenosyl-L-methionine-binding positions include T69, D90, and 116 to 117 (DA).

This sequence belongs to the class I-like SAM-binding methyltransferase superfamily. MenG/UbiE family.

The enzyme catalyses a 2-demethylmenaquinol + S-adenosyl-L-methionine = a menaquinol + S-adenosyl-L-homocysteine + H(+). It catalyses the reaction a 2-methoxy-6-(all-trans-polyprenyl)benzene-1,4-diol + S-adenosyl-L-methionine = a 5-methoxy-2-methyl-3-(all-trans-polyprenyl)benzene-1,4-diol + S-adenosyl-L-homocysteine + H(+). Its pathway is quinol/quinone metabolism; menaquinone biosynthesis; menaquinol from 1,4-dihydroxy-2-naphthoate: step 2/2. It functions in the pathway cofactor biosynthesis; ubiquinone biosynthesis. Its function is as follows. Methyltransferase required for the conversion of demethylmenaquinol (DMKH2) to menaquinol (MKH2) and the conversion of 2-polyprenyl-6-methoxy-1,4-benzoquinol (DDMQH2) to 2-polyprenyl-3-methyl-6-methoxy-1,4-benzoquinol (DMQH2). This chain is Ubiquinone/menaquinone biosynthesis C-methyltransferase UbiE, found in Ralstonia nicotianae (strain ATCC BAA-1114 / GMI1000) (Ralstonia solanacearum).